The chain runs to 739 residues: MEHVTVSEEPSATLMYHVERPIFSEAYIDSELLHKRKKTPKPYKLRVAEHLCCSSEKVKSVVFGFLPILTWLPSYPLKEYLFGDIVSGISTGVMQLPQGLAYAMLAAVPPVFGLYSSFYPVLLYTFFGTSKHISIGTFAVISLMIGGVAVREAPDSMFMVNGTNSSLVVNIEARDSRRVEVVVALTTLVGIIQFVLGLLRFGFLAIYLTEPLVRGFTTAAAVHVSVSQLKYLLGVKTARFNGPLSVVYSLDAVLRNIADTNIVTLIIGLGCTVFLYIIKQLNERFKKKLLIPIPGEIIVVIVSTGISYGMLMSENYGVDVVGKIPTGLLPPKVPDFSVFPNLFADAVPIAVVGFSITISLAKTFALKYGYSVDGNQELIALGLCNFVSSFFHTFVVTASMSRSLVQESTGGHTEIAGLLASLLVLLVVVAIGFVFQPLPTTVLAAIIMVNLLGMFKQTRDIPVLWRKSKIELAIWLVSFFASVLLGLDYGLAVAMAFAILTVIYRTQRPKNVVLGQIPDTGLYFDVDEYEEAEECSGIKIFQSNSSIYFANSELYVKALKAKTGIDPEKLLDAKKLQLKYAKRDTEGTKTVNQGSLLKKNAVVLLDMELGVTHEVLNGPQKPKHVHTNGQMTEKHIESESEDEFFLQRLTPIHSVILDFTPVNFIDSVGAKTIKSVIKEYATVDVKVVLAGCSRTLLSELRTLQFFSEPVTPDLIFPTIHDAVLQCKRWRDLPVHPNIH.

Residues 1–76 (MEHVTVSEEP…PILTWLPSYP (76 aa)) lie on the Cytoplasmic side of the membrane. Residues 77–106 (LKEYLFGDIVSGISTGVMQLPQGLAYAMLA) traverse the membrane as a helical segment. Residues 107–109 (AVP) are Extracellular-facing. The helical transmembrane segment at 110-127 (PVFGLYSSFYPVLLYTFF) threads the bilayer. Topologically, residues 128 to 138 (GTSKHISIGTF) are cytoplasmic. Residues 139–152 (AVISLMIGGVAVRE) traverse the membrane as a helical segment. Topologically, residues 153–169 (APDSMFMVNGTNSSLVV) are extracellular. 2 N-linked (GlcNAc...) asparagine glycosylation sites follow: Asn-161 and Asn-164. Residues 170-199 (NIEARDSRRVEVVVALTTLVGIIQFVLGLL) traverse the membrane as a helical segment. Over 200–209 (RFGFLAIYLT) the chain is Cytoplasmic. The helical transmembrane segment at 210-233 (EPLVRGFTTAAAVHVSVSQLKYLL) threads the bilayer. Residues 234-244 (GVKTARFNGPL) lie on the Extracellular side of the membrane. An intramembrane region (helical) is located at residues 245-256 (SVVYSLDAVLRN). Over 257–261 (IADTN) the chain is Extracellular. The chain crosses the membrane as a helical span at residues 262–285 (IVTLIIGLGCTVFLYIIKQLNERF). The Cytoplasmic portion of the chain corresponds to 286–294 (KKKLLIPIP). The chain crosses the membrane as a helical span at residues 295 to 310 (GEIIVVIVSTGISYGM). Residues 311 to 335 (LMSENYGVDVVGKIPTGLLPPKVPD) are Extracellular-facing. Residues 336–370 (FSVFPNLFADAVPIAVVGFSITISLAKTFALKYGY) traverse the membrane as a helical segment. The Cytoplasmic segment spans residues 371–373 (SVD). Residues 374–391 (GNQELIALGLCNFVSSFF) traverse the membrane as a helical segment. At 392 to 399 (HTFVVTAS) the chain is on the extracellular side. A helical transmembrane segment spans residues 400–409 (MSRSLVQEST). Ser-401 is a binding site for salicylate. The Cytoplasmic portion of the chain corresponds to 410–413 (GGHT). A helical transmembrane segment spans residues 414–435 (EIAGLLASLLVLLVVVAIGFVF). The Extracellular portion of the chain corresponds to 436–439 (QPLP). Residues 440–467 (TTVLAAIIMVNLLGMFKQTRDIPVLWRK) form a helical membrane-spanning segment. Ser-468 is a topological domain (cytoplasmic). A helical transmembrane segment spans residues 469 to 484 (KIELAIWLVSFFASVL). Over 485-486 (LG) the chain is Extracellular. The helical transmembrane segment at 487–507 (LDYGLAVAMAFAILTVIYRTQ) threads the bilayer. The extended region for STAS domain stretch occupies residues 508-731 (RPKNVVLGQI…AVLQCKRWRD (224 aa)). At 508 to 739 (RPKNVVLGQI…RDLPVHPNIH (232 aa)) the chain is on the cytoplasmic side. One can recognise an STAS domain in the interval 528-726 (EYEEAEECSG…PTIHDAVLQC (199 aa)).

It belongs to the SLC26A/SulP transporter (TC 2.A.53) family. Homodimer. Interacts (via STAS domain) with CALM; this interaction is calcium-dependent. As to expression, expressed in hair cells of the auditory organs.

It is found in the cell membrane. The catalysed reaction is oxalate(in) + chloride(out) = oxalate(out) + chloride(in). It carries out the reaction sulfate(out) + chloride(in) = sulfate(in) + chloride(out). Its activity is regulated as follows. Sulfate/chloride antiport activity is inhibited by salicylate; this inhibition is reversible. Electrogenic antiporter that exchanges sulfate or oxalate for chloride ion in a strictly coupled manner with a 1:1 stoichiometry. Adopts a dynamic conformation, which alternates between the exposure of the central binding site to the extra- and intracellular solutions leading to an inward-to-outward conformational transition during the transport cycle. Generates voltage-dependent charge movements resembling to the non-linear capacitance (NLC) of the cell membrane, but which are not associated to electromotile activity. The protein is Prestin of Danio rerio (Zebrafish).